Consider the following 324-residue polypeptide: Corticotropin-releasing factor-binding protein (324 aa).

A signal peptide spans 1–23 (MAPTLKLQCHFILVCLLALRGES). 5 disulfide bridges follow: Cys62–Cys83, Cys106–Cys143, Cys185–Cys207, Cys239–Cys266, and Cys279–Cys320. The N-linked (GlcNAc...) asparagine glycan is linked to Asn206.

It belongs to the CRF-binding protein family.

It is found in the secreted. In terms of biological role, binds CRF and inactivates it. May prevent inappropriate pituitary-adrenal stimulation in pregnancy. The sequence is that of Corticotropin-releasing factor-binding protein (CRHBP) from Ovis aries (Sheep).